Reading from the N-terminus, the 560-residue chain is Calcium-binding and coiled-coil domain-containing protein 1-A (560 aa).

Coiled coils occupy residues K156–I192 and W367–L480. A disordered region spans residues L480–S517. The segment covering S487 to L496 has biased composition (low complexity).

Belongs to the CALCOCO family.

It localises to the cytoplasm. The protein resides in the nucleus. Its function is as follows. May function as a coactivator for aryl hydrocarbon and nuclear receptors. In Xenopus laevis (African clawed frog), this protein is Calcium-binding and coiled-coil domain-containing protein 1-A (calcoco1-a).